The following is a 429-amino-acid chain: Serine hydroxymethyltransferase (429 aa).

Residues leucine 130 and 134 to 136 (GHL) contribute to the (6S)-5,6,7,8-tetrahydrofolate site. Lysine 239 is modified (N6-(pyridoxal phosphate)lysine).

It belongs to the SHMT family. In terms of assembly, homodimer. The cofactor is pyridoxal 5'-phosphate.

The protein resides in the cytoplasm. It catalyses the reaction (6R)-5,10-methylene-5,6,7,8-tetrahydrofolate + glycine + H2O = (6S)-5,6,7,8-tetrahydrofolate + L-serine. It participates in one-carbon metabolism; tetrahydrofolate interconversion. It functions in the pathway amino-acid biosynthesis; glycine biosynthesis; glycine from L-serine: step 1/1. Its function is as follows. Catalyzes the reversible interconversion of serine and glycine with tetrahydrofolate (THF) serving as the one-carbon carrier. This reaction serves as the major source of one-carbon groups required for the biosynthesis of purines, thymidylate, methionine, and other important biomolecules. Also exhibits THF-independent aldolase activity toward beta-hydroxyamino acids, producing glycine and aldehydes, via a retro-aldol mechanism. The sequence is that of Serine hydroxymethyltransferase from Phenylobacterium zucineum (strain HLK1).